The primary structure comprises 1286 residues: DNA-directed RNA polymerase subunit beta' (1286 aa).

Zn(2+)-binding residues include C58, C60, C73, and C76. D533, D535, and D537 together coordinate Mg(2+). Zn(2+) is bound by residues C867, C944, C951, and C954.

Belongs to the RNA polymerase beta' chain family. In terms of assembly, the RNAP catalytic core consists of 2 alpha, 1 beta, 1 beta' and 1 omega subunit. When a sigma factor is associated with the core the holoenzyme is formed, which can initiate transcription. Mg(2+) is required as a cofactor. It depends on Zn(2+) as a cofactor.

It carries out the reaction RNA(n) + a ribonucleoside 5'-triphosphate = RNA(n+1) + diphosphate. DNA-dependent RNA polymerase catalyzes the transcription of DNA into RNA using the four ribonucleoside triphosphates as substrates. The polypeptide is DNA-directed RNA polymerase subunit beta' (Tropheryma whipplei (strain TW08/27) (Whipple's bacillus)).